We begin with the raw amino-acid sequence, 341 residues long: Zinc transporter 6, chloroplastic (341 aa).

Residues 28–48 (IVAVFAIFLTSVFGVWGPVLL) form a helical membrane-spanning segment. Residues 49–61 (AKYFHGKPLYDKA) lie on the Cytoplasmic side of the membrane. A helical membrane pass occupies residues 62–82 (ILVIKCFAAGVILSTSLVHVL). The Lumenal segment spans residues 83 to 102 (PEAFESLADCQVSSRHPWKD). A helical membrane pass occupies residues 103–123 (FPFAGLVTMIGAITALLVDLT). At 124 to 179 (ASEHMGHGGGGGGDGGMEYMPVGKAVGGLEMKEGKCGADLEIQENSEEEIVKMKQR) the chain is on the cytoplasmic side. The helical transmembrane segment at 180–200 (LVSQVLEIGIIFHSVIIGVTM) threads the bilayer. Topologically, residues 201-211 (GMSQNKCTIRP) are lumenal. A helical transmembrane segment spans residues 212-232 (LIAALSFHQIFEGLGLGGCIA). The Cytoplasmic portion of the chain corresponds to 233 to 243 (QAGFKAGTVVY). The chain crosses the membrane as a helical span at residues 244–264 (MCLMFAVTTPLGIVLGMVIFA). Topologically, residues 265-280 (ATGYDDQNPNALIMEG) are lumenal. A helical membrane pass occupies residues 281-301 (LLGSFSSGILIYMALVDLIAL). Residues 302 to 320 (DFFHNKMLTTCGESGSRLK) lie on the Cytoplasmic side of the membrane. A helical membrane pass occupies residues 321–341 (KLCFVALVLGSASMSLLALWA).

This sequence belongs to the ZIP transporter (TC 2.A.5) family.

It localises to the plastid. The protein resides in the chloroplast thylakoid membrane. In terms of biological role, may play a role in the transport of zinc in the plastids. The polypeptide is Zinc transporter 6, chloroplastic (ZIP6) (Arabidopsis thaliana (Mouse-ear cress)).